A 336-amino-acid chain; its full sequence is Ketol-acid reductoisomerase (NADP(+)) (336 aa).

The region spanning alanine 3–threonine 183 is the KARI N-terminal Rossmann domain. NADP(+) contacts are provided by residues tyrosine 26–glutamine 29, arginine 49, serine 52, serine 54, and aspartate 84–glutamine 87. Residue histidine 109 is part of the active site. Position 135 (glycine 135) interacts with NADP(+). The 146-residue stretch at threonine 184 to isoleucine 329 folds into the KARI C-terminal knotted domain. Positions 192, 196, 228, and 232 each coordinate Mg(2+). Residue serine 253 coordinates substrate.

It belongs to the ketol-acid reductoisomerase family. It depends on Mg(2+) as a cofactor.

The catalysed reaction is (2R)-2,3-dihydroxy-3-methylbutanoate + NADP(+) = (2S)-2-acetolactate + NADPH + H(+). It carries out the reaction (2R,3R)-2,3-dihydroxy-3-methylpentanoate + NADP(+) = (S)-2-ethyl-2-hydroxy-3-oxobutanoate + NADPH + H(+). Its pathway is amino-acid biosynthesis; L-isoleucine biosynthesis; L-isoleucine from 2-oxobutanoate: step 2/4. It functions in the pathway amino-acid biosynthesis; L-valine biosynthesis; L-valine from pyruvate: step 2/4. In terms of biological role, involved in the biosynthesis of branched-chain amino acids (BCAA). Catalyzes an alkyl-migration followed by a ketol-acid reduction of (S)-2-acetolactate (S2AL) to yield (R)-2,3-dihydroxy-isovalerate. In the isomerase reaction, S2AL is rearranged via a Mg-dependent methyl migration to produce 3-hydroxy-3-methyl-2-ketobutyrate (HMKB). In the reductase reaction, this 2-ketoacid undergoes a metal-dependent reduction by NADPH to yield (R)-2,3-dihydroxy-isovalerate. This Deinococcus geothermalis (strain DSM 11300 / CIP 105573 / AG-3a) protein is Ketol-acid reductoisomerase (NADP(+)).